The chain runs to 539 residues: Glucose-6-phosphate isomerase (539 aa).

Glu353 serves as the catalytic Proton donor. Catalysis depends on residues His384 and Lys505.

Belongs to the GPI family.

Its subcellular location is the cytoplasm. It carries out the reaction alpha-D-glucose 6-phosphate = beta-D-fructose 6-phosphate. It participates in carbohydrate biosynthesis; gluconeogenesis. The protein operates within carbohydrate degradation; glycolysis; D-glyceraldehyde 3-phosphate and glycerone phosphate from D-glucose: step 2/4. In terms of biological role, catalyzes the reversible isomerization of glucose-6-phosphate to fructose-6-phosphate. The chain is Glucose-6-phosphate isomerase from Ralstonia nicotianae (strain ATCC BAA-1114 / GMI1000) (Ralstonia solanacearum).